Reading from the N-terminus, the 526-residue chain is Peptide chain release factor 3 (526 aa).

Residues 8 to 277 (GKRRTFAIIS…GLTDWAPAPQ (270 aa)) form the tr-type G domain. GTP contacts are provided by residues 17–24 (SHPDAGKT), 85–89 (DTPGH), and 139–142 (NKLD).

This sequence belongs to the TRAFAC class translation factor GTPase superfamily. Classic translation factor GTPase family. PrfC subfamily.

The protein resides in the cytoplasm. Increases the formation of ribosomal termination complexes and stimulates activities of RF-1 and RF-2. It binds guanine nucleotides and has strong preference for UGA stop codons. It may interact directly with the ribosome. The stimulation of RF-1 and RF-2 is significantly reduced by GTP and GDP, but not by GMP. The chain is Peptide chain release factor 3 from Aliivibrio fischeri (strain MJ11) (Vibrio fischeri).